Here is an 88-residue protein sequence, read N- to C-terminus: Sec-independent protein translocase protein TatA (88 aa).

The helical transmembrane segment at I3 to G23 threads the bilayer. The tract at residues M56–K88 is disordered. A compositionally biased stretch (polar residues) spans S67–I76. The segment covering N77–K88 has biased composition (basic and acidic residues).

The protein belongs to the TatA/E family. As to quaternary structure, forms a complex with TatC.

The protein resides in the cell inner membrane. Its function is as follows. Part of the twin-arginine translocation (Tat) system that transports large folded proteins containing a characteristic twin-arginine motif in their signal peptide across membranes. TatA could form the protein-conducting channel of the Tat system. The polypeptide is Sec-independent protein translocase protein TatA (Prochlorococcus marinus (strain AS9601)).